The following is a 977-amino-acid chain: Phosphatidylinositol 4-kinase PIK1alpha (977 aa).

Residues 1 to 125 (MSADITETPN…QAVRNLITKI (125 aa)) form the PIK helical domain. Residues 205–261 (MSADIPKGSHSDDETATSSSIKPSLSRSASVPRRNTKKTSLSFSSDESEAYTTDDDD) are disordered. The span at 220 to 233 (ATSSSIKPSLSRSA) shows a compositional bias: polar residues. Residues 250 to 261 (DESEAYTTDDDD) are compositionally biased toward acidic residues. Residues 679-960 (EDWNTKKQRI…FLIGKSLGSM (282 aa)) form the PI3K/PI4K catalytic domain. The segment at 685 to 691 (KQRIKKS) is G-loop. Positions 826–834 (QIKDRHNGN) are catalytic loop. The tract at residues 845 to 869 (HIDFGFLLSNSPGSVGFEAAPFKLT) is activation loop.

It belongs to the PI3/PI4-kinase family. Type III PI4K subfamily.

Its subcellular location is the nucleus. The catalysed reaction is a 1,2-diacyl-sn-glycero-3-phospho-(1D-myo-inositol) + ATP = a 1,2-diacyl-sn-glycero-3-phospho-(1D-myo-inositol 4-phosphate) + ADP + H(+). In terms of biological role, acts on phosphatidylinositol (PI) in the first committed step in the production of the second messenger inositol 1,4,5,-trisphosphate. This chain is Phosphatidylinositol 4-kinase PIK1alpha (PIKALPHA), found in Candida albicans (strain SC5314 / ATCC MYA-2876) (Yeast).